A 508-amino-acid polypeptide reads, in one-letter code: Chromosomal replication initiator protein DnaA (508 aa).

Residues 1-90 (MSVELWQQCV…RRSSAPRAAP (90 aa)) are domain I, interacts with DnaA modulators. The segment at 91 to 171 (NAPVSAAVAA…QVEGALKHTS (81 aa)) is domain II. The tract at residues 130-160 (EVEEPSSRDSFDSMSDSGSVPAASGRTEQRT) is disordered. Residues 172–388 (YLNRTFTFET…GALKRVIAHS (217 aa)) form a domain III, AAA+ region region. Gly-216, Gly-218, Lys-219, and Thr-220 together coordinate ATP. Residues 389–508 (HFMGRDITIE…YKNLLRTLTT (120 aa)) form a domain IV, binds dsDNA region.

This sequence belongs to the DnaA family. As to quaternary structure, oligomerizes as a right-handed, spiral filament on DNA at oriC.

The protein resides in the cytoplasm. Its function is as follows. Plays an essential role in the initiation and regulation of chromosomal replication. ATP-DnaA binds to the origin of replication (oriC) to initiate formation of the DNA replication initiation complex once per cell cycle. Binds the DnaA box (a 9 base pair repeat at the origin) and separates the double-stranded (ds)DNA. Forms a right-handed helical filament on oriC DNA; dsDNA binds to the exterior of the filament while single-stranded (ss)DNA is stabiized in the filament's interior. The ATP-DnaA-oriC complex binds and stabilizes one strand of the AT-rich DNA unwinding element (DUE), permitting loading of DNA polymerase. After initiation quickly degrades to an ADP-DnaA complex that is not apt for DNA replication. Binds acidic phospholipids. The polypeptide is Chromosomal replication initiator protein DnaA (Pseudomonas entomophila (strain L48)).